Consider the following 458-residue polypeptide: Zinc finger protein 19 (458 aa).

The KRAB domain maps to 14–85; the sequence is VTFEDVAVHF…EAQDDPPAER (72 aa). C2H2-type zinc fingers lie at residues 161–183, 189–211, 217–239, 245–267, 273–295, 301–323, 329–351, 357–379, and 385–407; these read FICEECGKSFSYFSYYARHQRIH, FECSECGKAFNGNSSLIRHQRIH, YQCEECGRAFNDNANLIRHQRIH, YYCTECGNSFTSSSEFVIHQRIH, YECNECGKAFVGNSPLLRHQKIH, YECNECGKSFGRTSHLSQHQRIH, YSCKVCGQAFNFHTKLTRHQRIH, FDCVDCGKAFSAQEQLKRHLRIH, and YVCDECGKALTSKRNLHQHQRIH. The C2H2-type 10; atypical zinc-finger motif lies at 413 to 433; sequence YECSKYEKAFGTSSQLGHLEH.

Belongs to the krueppel C2H2-type zinc-finger protein family.

The protein localises to the nucleus. Its function is as follows. May be involved in transcriptional regulation. The chain is Zinc finger protein 19 (ZNF19) from Homo sapiens (Human).